The primary structure comprises 229 residues: Cytidylate kinase (229 aa).

12-20 contacts ATP; that stretch reads GPSGSGKGT.

This sequence belongs to the cytidylate kinase family. Type 1 subfamily.

Its subcellular location is the cytoplasm. It catalyses the reaction CMP + ATP = CDP + ADP. The catalysed reaction is dCMP + ATP = dCDP + ADP. The chain is Cytidylate kinase from Pseudomonas syringae pv. tomato (strain ATCC BAA-871 / DC3000).